Here is a 290-residue protein sequence, read N- to C-terminus: Sodium/potassium-transporting ATPase subunit beta-2 (290 aa).

At 1-39 (MVIQKEKKSCGQVVEEWKEFVWNPRTHQFMGRTGTSWAF) the chain is on the cytoplasmic side. The chain crosses the membrane as a helical; Signal-anchor for type II membrane protein span at residues 40–67 (ILLFYLVFYGFLTAMFTLTMWVMLQTVS). Topologically, residues 68–290 (DHTPKYQDRL…VAFKLRINKT (223 aa)) are extracellular. N-linked (GlcNAc...) asparagine glycans are attached at residues N96 and N118. The cysteines at positions 129 and 150 are disulfide-linked. The N-linked (GlcNAc...) asparagine glycan is linked to N153. C160 and C177 form a disulfide bridge. N-linked (GlcNAc...) asparagine glycans are attached at residues N193, N197, and N238. The interval 193-289 (NQSMNVTCVG…RVAFKLRINK (97 aa)) is immunoglobulin-like. A disulfide bridge connects residues C200 and C261.

The protein belongs to the X(+)/potassium ATPases subunit beta family. In terms of assembly, the sodium/potassium-transporting ATPase is composed of a catalytic alpha subunit, an auxiliary non-catalytic beta subunit and an additional regulatory subunit. Interacts with BSG.

It is found in the cell membrane. This is the non-catalytic component of the active enzyme, which catalyzes the hydrolysis of ATP coupled with the exchange of Na(+) and K(+) ions across the plasma membrane. The exact function of the beta-2 subunit is not known. In terms of biological role, mediates cell adhesion of neurons and astrocytes, and promotes neurite outgrowth. The sequence is that of Sodium/potassium-transporting ATPase subunit beta-2 (ATP1B2) from Bos taurus (Bovine).